Here is a 358-residue protein sequence, read N- to C-terminus: Presenilin hop-1 (358 aa).

Residues 1–12 (MPRTKRVYSGKT) lie on the Cytoplasmic side of the membrane. A helical membrane pass occupies residues 13–33 (ITGVLYPVAICMLFVAINVKL). Residues 34–57 (SQPEQQEQSKVVYGLFHSYDTADS) lie on the Lumenal side of the membrane. Residues 58–78 (GTITLYLIGFLILTTSLGVFC) traverse the membrane as a helical segment. The Cytoplasmic segment spans residues 79 to 86 (YQMKFYKA). A helical transmembrane segment spans residues 87–107 (IKVYVLANSIGILLVYSVFHF). The Lumenal segment spans residues 108–115 (QRIAEAQS). The helical transmembrane segment at 116–136 (IPVSVPTFFFLILQFGGLGIT) threads the bilayer. Residues 137-148 (CLHWKSHRRLHQ) lie on the Cytoplasmic side of the membrane. The chain crosses the membrane as a helical span at residues 149-169 (FYLIMLAGLTAIFILNILPDW). A topological domain (lumenal) is located at residue Thr-170. Residues 171–191 (VWMALTAISFWDIVAVLTPCG) traverse the membrane as a helical segment. The active site involves Asp-182. At 192-273 (PLKMLVETAN…EVREVEGTIR (82 aa)) the chain is on the cytoplasmic side. A compositionally biased stretch (polar residues) spans 221–240 (EVDSPDTTRSNSTPLTEFNN). A disordered region spans residues 221–242 (EVDSPDTTRSNSTPLTEFNNSS). The helical transmembrane segment at 274-294 (LGMGDFVFYSLMLGNTVQTCP) threads the bilayer. The active site involves Asp-278. The Lumenal segment spans residues 295–297 (LPT). Residues 298 to 318 (VVACFVSNLVGLTITLPIVTL) form a helical membrane-spanning segment. The Cytoplasmic portion of the chain corresponds to 319-321 (SQT). The helical intramembrane region spans 322–342 (ALPALPFPLAIAAIFYFSSHI). Residues 324-326 (PAL) carry the PAL motif. Residues 343–358 (ALTPFTDLCTSQLILI) are Cytoplasmic-facing.

Belongs to the peptidase A22A family. Homodimer. Component of the gamma-secretase complex, a complex probably composed of the presenilin homodimer (sel-12, hop-1 or spe-4), nicastrin (aph-2), aph-1 and pen-2. In terms of tissue distribution, weakly expressed.

It is found in the endoplasmic reticulum membrane. Its subcellular location is the golgi apparatus membrane. Functionally, probable catalytic subunit of the gamma-secretase complex, an endoprotease complex that catalyzes the intramembrane cleavage of integral membrane proteins such as Notch receptors (lin-12 or glp-1). Probably works redundantly of lin-12, which provides more presenilin function. This is Presenilin hop-1 (hop-1) from Caenorhabditis elegans.